A 491-amino-acid polypeptide reads, in one-letter code: NADH-quinone oxidoreductase subunit N (491 aa).

A run of 14 helical transmembrane segments spans residues 11–31 (ATAE…TTFA), 38–58 (LAYG…YNTA), 74–94 (LLGD…LLYG), 106–126 (PEYY…VTSN), 128–148 (LLSM…LVAF), 163–183 (FVLG…LYGA), 206–226 (LLFG…VVPF), 243–263 (LIIA…LLVW), 272–292 (WQTM…LAAI), 301–321 (LAYS…SGVV), 336–356 (MFYA…IILL), 379–399 (FAAM…FIGF), 410–430 (VAAG…IGAF), and 465–485 (LAIA…TFVL).

It belongs to the complex I subunit 2 family. NDH-1 is composed of 14 different subunits. Subunits NuoA, H, J, K, L, M, N constitute the membrane sector of the complex.

The protein localises to the cell inner membrane. The catalysed reaction is a quinone + NADH + 5 H(+)(in) = a quinol + NAD(+) + 4 H(+)(out). NDH-1 shuttles electrons from NADH, via FMN and iron-sulfur (Fe-S) centers, to quinones in the respiratory chain. The immediate electron acceptor for the enzyme in this species is believed to be ubiquinone. Couples the redox reaction to proton translocation (for every two electrons transferred, four hydrogen ions are translocated across the cytoplasmic membrane), and thus conserves the redox energy in a proton gradient. The chain is NADH-quinone oxidoreductase subunit N from Azoarcus sp. (strain BH72).